We begin with the raw amino-acid sequence, 380 residues long: Queuine tRNA-ribosyltransferase (380 aa).

The active-site Proton acceptor is the Asp-96. Substrate-binding positions include 96–100, Asp-150, Gln-193, and Gly-220; that span reads DSGGF. The tract at residues 251–257 is RNA binding; the sequence is GVGAPDS. Asp-270 (nucleophile) is an active-site residue. The tract at residues 275 to 279 is RNA binding; important for wobble base 34 recognition; sequence TRIAR. Cys-308, Cys-310, Cys-313, and His-339 together coordinate Zn(2+).

The protein belongs to the queuine tRNA-ribosyltransferase family. As to quaternary structure, homodimer. Within each dimer, one monomer is responsible for RNA recognition and catalysis, while the other monomer binds to the replacement base PreQ1. The cofactor is Zn(2+).

The enzyme catalyses 7-aminomethyl-7-carbaguanine + guanosine(34) in tRNA = 7-aminomethyl-7-carbaguanosine(34) in tRNA + guanine. The protein operates within tRNA modification; tRNA-queuosine biosynthesis. Catalyzes the base-exchange of a guanine (G) residue with the queuine precursor 7-aminomethyl-7-deazaguanine (PreQ1) at position 34 (anticodon wobble position) in tRNAs with GU(N) anticodons (tRNA-Asp, -Asn, -His and -Tyr). Catalysis occurs through a double-displacement mechanism. The nucleophile active site attacks the C1' of nucleotide 34 to detach the guanine base from the RNA, forming a covalent enzyme-RNA intermediate. The proton acceptor active site deprotonates the incoming PreQ1, allowing a nucleophilic attack on the C1' of the ribose to form the product. After dissociation, two additional enzymatic reactions on the tRNA convert PreQ1 to queuine (Q), resulting in the hypermodified nucleoside queuosine (7-(((4,5-cis-dihydroxy-2-cyclopenten-1-yl)amino)methyl)-7-deazaguanosine). This is Queuine tRNA-ribosyltransferase from Streptococcus thermophilus (strain CNRZ 1066).